The primary structure comprises 80 residues: Small ribosomal subunit protein bS16 (80 aa).

The protein belongs to the bacterial ribosomal protein bS16 family.

This chain is Small ribosomal subunit protein bS16, found in Nitrosococcus oceani (strain ATCC 19707 / BCRC 17464 / JCM 30415 / NCIMB 11848 / C-107).